A 420-amino-acid chain; its full sequence is Aminoacyltransferase FemA (420 aa).

Belongs to the FemABX family. In terms of assembly, homodimer. Interacts with FemB.

The protein resides in the cytoplasm. The catalysed reaction is beta-D-GlcNAc-(1-&gt;4)-Mur2Ac(oyl-L-Ala-D-isoglutaminyl-L-Lys-(N(6)-Gly)-D-Ala-D-Ala)-di-trans,octa-cis-undecaprenyl diphosphate + 2 glycyl-tRNA(Gly) = MurNAc-L-Ala-D-isoglutaminyl-L-Lys-(N(6)-tri-Gly)-D-Ala-D-Ala-diphospho-di-trans,octa-cis-undecaprenyl-GlcNAc + 2 tRNA(Gly) + 2 H(+). In terms of biological role, catalyzes the formation of the pentaglycine interpeptide bridge, which is characteristic of the S.aureus peptidoglycan. Adds glycines 2 and 3 of the pentaglycine bridge, using glycyl-tRNA(Gly) as donor. Involved in resistance to methicillin. The chain is Aminoacyltransferase FemA (femA) from Staphylococcus aureus (strain NCTC 8325 / PS 47).